Here is a 315-residue protein sequence, read N- to C-terminus: GTPase Era (315 aa).

Residues arginine 21–proline 190 enclose the Era-type G domain. The segment at glycine 29 to serine 36 is G1. GTP is bound at residue glycine 29 to serine 36. The G2 stretch occupies residues glutamine 55–asparagine 59. Residues aspartate 76–glycine 79 are G3. Residues aspartate 76–isoleucine 80 and asparagine 138–aspartate 141 each bind GTP. The segment at asparagine 138–aspartate 141 is G4. The G5 stretch occupies residues phenylalanine 169–alanine 171. A KH type-2 domain is found at threonine 221–proline 297.

The protein belongs to the TRAFAC class TrmE-Era-EngA-EngB-Septin-like GTPase superfamily. Era GTPase family. Monomer.

It localises to the cytoplasm. It is found in the cell inner membrane. In terms of biological role, an essential GTPase that binds both GDP and GTP, with rapid nucleotide exchange. Plays a role in 16S rRNA processing and 30S ribosomal subunit biogenesis and possibly also in cell cycle regulation and energy metabolism. The chain is GTPase Era from Synechocystis sp. (strain ATCC 27184 / PCC 6803 / Kazusa).